A 231-amino-acid chain; its full sequence is Uracil-DNA glycosylase (231 aa).

Aspartate 71 acts as the Proton acceptor in catalysis.

This sequence belongs to the uracil-DNA glycosylase (UDG) superfamily. UNG family.

The protein resides in the cytoplasm. It catalyses the reaction Hydrolyzes single-stranded DNA or mismatched double-stranded DNA and polynucleotides, releasing free uracil.. Its function is as follows. Excises uracil residues from the DNA which can arise as a result of misincorporation of dUMP residues by DNA polymerase or due to deamination of cytosine. The protein is Uracil-DNA glycosylase of Pseudomonas aeruginosa (strain ATCC 15692 / DSM 22644 / CIP 104116 / JCM 14847 / LMG 12228 / 1C / PRS 101 / PAO1).